Reading from the N-terminus, the 286-residue chain is Thymidylate synthase (286 aa).

140 to 141 (RR) contributes to the dUMP binding site. C161 functions as the Nucleophile in the catalytic mechanism. Residues 185 to 188 (RSND), N196, and 226 to 228 (HIY) contribute to the dUMP site. A (6R)-5,10-methylene-5,6,7,8-tetrahydrofolate-binding site is contributed by D188. A285 contributes to the (6R)-5,10-methylene-5,6,7,8-tetrahydrofolate binding site.

The protein belongs to the thymidylate synthase family. Bacterial-type ThyA subfamily. In terms of assembly, homodimer.

It is found in the cytoplasm. It carries out the reaction dUMP + (6R)-5,10-methylene-5,6,7,8-tetrahydrofolate = 7,8-dihydrofolate + dTMP. Its pathway is pyrimidine metabolism; dTTP biosynthesis. Functionally, catalyzes the reductive methylation of 2'-deoxyuridine-5'-monophosphate (dUMP) to 2'-deoxythymidine-5'-monophosphate (dTMP) while utilizing 5,10-methylenetetrahydrofolate (mTHF) as the methyl donor and reductant in the reaction, yielding dihydrofolate (DHF) as a by-product. This enzymatic reaction provides an intracellular de novo source of dTMP, an essential precursor for DNA biosynthesis. This Streptococcus thermophilus (strain ATCC BAA-250 / LMG 18311) protein is Thymidylate synthase.